The primary structure comprises 2726 residues: Filamin-C (2726 aa).

The interval 1-260 is actin-binding; it reads MMNNSNYSDA…VMTYLSQFPK (260 aa). Position 5 is a phosphoserine (Ser5). Calponin-homology (CH) domains follow at residues 37 to 143 and 160 to 263; these read KIQQ…LHYS and QTPK…KAKL. 15 Filamin repeats span residues 271–369, 371–469, 470–566, 567–659, 663–759, 760–862, 863–961, 962–1057, 1058–1150, 1151–1245, 1246–1345, 1346–1438, 1439–1534, 1535–1631, and 1636–1735; these read SKQL…EVNV, MALG…PVHV, AEAC…EVQV, SPEA…IAHI, PPDC…RVNV, GEGS…HIKV, DPSH…VVNV, APPL…AVEG, VLPP…KATI, QPVF…RVHV, QPAV…RVGV, TEGC…RVPV, KDVV…KIKV, LPSH…RIHA, and DASK…HVLA. Arg1003 is subject to Omega-N-methylarginine. Phosphoserine occurs at positions 1162 and 1339. Positions 1736-1759 are hinge 1; it reads CDPLPHVEEPAEMLQMRQPYAPLR. Filamin repeat units follow at residues 1760–1855, 1856–1947, 1948–2034, and 2037–2129; these read PGTC…QFYV, DAIN…TAKI, TGDD…KILV, and SEIG…TVKV. A Phosphoserine modification is found at Ser2043. The segment at 2163–2244 is intradomain insert; mediate targeting to Z lines; sequence GNWFQMVSAQ…FGSITRQQEG (82 aa). Residues 2193-2210 are compositionally biased toward basic and acidic residues; sequence EISKTRGGETKREVRVEE. Positions 2193–2214 are disordered; the sequence is EISKTRGGETKREVRVEESTQV. The stretch at 2212 to 2307 is one Filamin 20; mediates interaction with XIRP1 repeat; the sequence is TQVGGDPFPA…VPGSPFQFTV (96 aa). A phosphoserine mark is found at Ser2234 and Ser2237. Thr2239 carries the post-translational modification Phosphothreonine. Polar residues predominate over residues 2241 to 2260; the sequence is QQEGEASSQDMTAQVTSPSG. The tract at residues 2241–2261 is disordered; the sequence is QQEGEASSQDMTAQVTSPSGK. 3 Filamin repeats span residues 2310–2402, 2404–2497, and 2501–2593; these read LGEG…VVPV, SLSD…KIRV, and SQAG…KAKV. An interaction with INPPL1 region spans residues 2404–2725; that stretch reads SLSDDARRLT…VPGSPFKVNV (322 aa). 6 positions are modified to phosphoserine: Ser2587, Ser2618, Ser2621, Ser2633, Ser2715, and Ser2719. A hinge 2 region spans residues 2594–2630; that stretch reads TGPRLSGGHSLHETSTVLVETVTKSSSSRGASYSSIP. The segment at 2594–2726 is self-association site, tail; the sequence is TGPRLSGGHS…PGSPFKVNVP (133 aa). A Filamin 24 repeat occupies 2631-2725; it reads KFSSDASKVV…VPGSPFKVNV (95 aa).

Belongs to the filamin family. In terms of assembly, homodimer; the filamin repeat 24 and the second hinge domain are important for dimer formation. Interacts with FLNB, INPPL1, ITGB1A, KCND2, MYOT, MYOZ1 and MYOZ3. Interacts with sarcoglycans SGCD and SGCG. Interacts (via filament repeats 17-18, 20-21 and 24) with USP25 (isoform USP25m only). Interacts with FBLIM1. Interacts with XIRP1; this interaction is mediated by filamin 20 repeat. Interacts with KY. Interacts with IGFN1. Interacts with MICALL2. Interacts with ANK3. Interacts with MICALL2. Interacts with ANK3. Interacts with SYNPO2. Post-translationally, ubiquitinated by FBXL22, leading to proteasomal degradation.

The protein localises to the cytoplasm. It is found in the membrane. Its subcellular location is the cytoskeleton. The protein resides in the myofibril. It localises to the sarcomere. The protein localises to the z line. In terms of biological role, muscle-specific filamin, which plays a central role in sarcomere assembly and organization. Critical for normal myogenesis, it probably functions as a large actin-cross-linking protein with structural functions at the Z lines in muscle cells. May be involved in reorganizing the actin cytoskeleton in response to signaling events. The sequence is that of Filamin-C (Flnc) from Mus musculus (Mouse).